A 118-amino-acid polypeptide reads, in one-letter code: UPF0212 protein HQ_2663A (118 aa).

This sequence belongs to the UPF0212 family.

The polypeptide is UPF0212 protein HQ_2663A (Haloquadratum walsbyi (strain DSM 16790 / HBSQ001)).